Here is a 284-residue protein sequence, read N- to C-terminus: Elongation factor Ts (284 aa).

Residues 80–83 (TDFV) form an involved in Mg(2+) ion dislocation from EF-Tu region.

This sequence belongs to the EF-Ts family.

Its subcellular location is the cytoplasm. In terms of biological role, associates with the EF-Tu.GDP complex and induces the exchange of GDP to GTP. It remains bound to the aminoacyl-tRNA.EF-Tu.GTP complex up to the GTP hydrolysis stage on the ribosome. In Neisseria meningitidis serogroup A / serotype 4A (strain DSM 15465 / Z2491), this protein is Elongation factor Ts.